Consider the following 163-residue polypeptide: Glutathione peroxidase-like peroxiredoxin HYR1 (163 aa).

The Cysteine sulfenic acid (-SOH) intermediate role is filled by C36. An intrachain disulfide couples C36 to C82.

It belongs to the glutathione peroxidase family. Interacts with YAP1 and probably YBP1.

Its subcellular location is the cytoplasm. It localises to the mitochondrion intermembrane space. It is found in the peroxisome matrix. It carries out the reaction a hydroperoxide + [thioredoxin]-dithiol = an alcohol + [thioredoxin]-disulfide + H2O. In terms of biological role, involved in oxidative stress response and redox homeostasis. Functions as a sensor and transducer of hydroperoxide stress. In response to hydroperoxide stress it oxidizes (activates) the transcription activator YAP1, which is involved in transcription activation of genes of the oxidative stress response pathway. May also play a direct role in hydroperoxide scavenging, being the most active of three closely related S.cerevisiae peroxiredoxins (GPX1, GPX2, and HYR1/GPX3) with respect to peroxide and lipid hydroperoxide reduction. The three enzymes are not required for the glutaredoxin-mediated antioxidant function. In the presence of peroxides, HYR1/GPX3 is directly oxidized at Cys-36 to form a cysteine sulfenic acid (-SOH). Cys-36-SOH then forms either an intramolecular disulfide bond (Cys-36 with Cys-82) or a transient, intermolecular disulfide bond with 'Cys-598' of YAP1, which is further resolved into a YAP1 intramolecular disulfide bond ('Cys-303' with 'Cys-598'), which causes its nuclear accumulation and activation, and a reduced Cys-36 in HYR1/GPX3. This chain is Glutathione peroxidase-like peroxiredoxin HYR1, found in Saccharomyces cerevisiae (strain ATCC 204508 / S288c) (Baker's yeast).